Here is a 101-residue protein sequence, read N- to C-terminus: Urease subunit beta (101 aa).

The protein belongs to the urease beta subunit family. In terms of assembly, heterotrimer of UreA (gamma), UreB (beta) and UreC (alpha) subunits. Three heterotrimers associate to form the active enzyme.

The protein resides in the cytoplasm. It carries out the reaction urea + 2 H2O + H(+) = hydrogencarbonate + 2 NH4(+). It functions in the pathway nitrogen metabolism; urea degradation; CO(2) and NH(3) from urea (urease route): step 1/1. In Cupriavidus pinatubonensis (strain JMP 134 / LMG 1197) (Cupriavidus necator (strain JMP 134)), this protein is Urease subunit beta.